Consider the following 545-residue polypeptide: RNA-directed RNA polymerase beta chain (545 aa).

Positions 243-373 (RLAQQGSVDG…PNLRKTFVSG (131 aa)) constitute a RdRp catalytic domain.

In terms of assembly, part of the viral RNA-dependent RNA polymerase complex, the other subunits are probably the host ribosomal protein S1, EF-Tu and EF-Ts.

The catalysed reaction is RNA(n) + a ribonucleoside 5'-triphosphate = RNA(n+1) + diphosphate. Functionally, this is the catalytic subunit of the viral RNA-dependent RNA polymerase complex. This complex is involved in viral RNA replication that produces (+)-stranded genomes via a complementary, (-)-stranded intermediate. In Escherichia coli (Bacteriophage MS2), this protein is RNA-directed RNA polymerase beta chain.